The chain runs to 211 residues: Urease accessory protein UreG (211 aa).

8 to 15 lines the GTP pocket; it reads GPVGSGKT.

Belongs to the SIMIBI class G3E GTPase family. UreG subfamily. As to quaternary structure, homodimer. UreD, UreF and UreG form a complex that acts as a GTP-hydrolysis-dependent molecular chaperone, activating the urease apoprotein by helping to assemble the nickel containing metallocenter of UreC. The UreE protein probably delivers the nickel.

It is found in the cytoplasm. Its function is as follows. Facilitates the functional incorporation of the urease nickel metallocenter. This process requires GTP hydrolysis, probably effectuated by UreG. The protein is Urease accessory protein UreG of Metallosphaera sedula (strain ATCC 51363 / DSM 5348 / JCM 9185 / NBRC 15509 / TH2).